We begin with the raw amino-acid sequence, 89 residues long: Small ribosomal subunit protein bS20 (89 aa).

Residues 1–10 (MKNRSAIKRH) show a composition bias toward basic residues. The tract at residues 1-30 (MKNRSAIKRHNQSEVRRMRNRSAKSEVRTT) is disordered. Residues 11 to 30 (NQSEVRRMRNRSAKSEVRTT) show a composition bias toward basic and acidic residues.

This sequence belongs to the bacterial ribosomal protein bS20 family.

Functionally, binds directly to 16S ribosomal RNA. This Treponema denticola (strain ATCC 35405 / DSM 14222 / CIP 103919 / JCM 8153 / KCTC 15104) protein is Small ribosomal subunit protein bS20.